A 66-amino-acid chain; its full sequence is Large ribosomal subunit protein uL29 (66 aa).

Belongs to the universal ribosomal protein uL29 family.

The protein is Large ribosomal subunit protein uL29 of Sinorhizobium fredii (strain NBRC 101917 / NGR234).